Reading from the N-terminus, the 344-residue chain is Putative esterase NocK (344 aa).

The segment at residues 1 to 34 (MIGVTRRSGLALAVLVSSAACAGAEPVAPPPAPA) is a signal peptide (tat-type signal). The tract at residues 265–295 (GGADERRREEARPAAAPGGTSTSRETCANPD) is disordered. Basic and acidic residues predominate over residues 266–276 (GADERRREEAR).

This sequence belongs to the AB hydrolase superfamily. Post-translationally, predicted to be exported by the Tat system. The position of the signal peptide cleavage has not been experimentally proven.

The chain is Putative esterase NocK from Nocardia uniformis subsp. tsuyamanensis.